The primary structure comprises 520 residues: Maturase K (520 aa).

It belongs to the intron maturase 2 family. MatK subfamily.

It localises to the plastid. Its subcellular location is the chloroplast. Its function is as follows. Usually encoded in the trnK tRNA gene intron. Probably assists in splicing its own and other chloroplast group II introns. This Aspidistra elatior (Cast-iron plant) protein is Maturase K.